The sequence spans 277 residues: Carbonyl reductase [NADPH] 3 (277 aa).

N-acetylserine is present on S2. NADP(+)-binding positions include 10–34 (VTGA…GDVV), 38–42 (RDEAR), 63–64 (DI), and N90. S30 is modified (phosphoserine). Position 140 (S140) interacts with substrate. The active-site Proton acceptor is the Y194. An NADP(+)-binding site is contributed by 194–198 (YGVSK).

This sequence belongs to the short-chain dehydrogenases/reductases (SDR) family.

It localises to the cytoplasm. It catalyses the reaction a secondary alcohol + NADP(+) = a ketone + NADPH + H(+). The enzyme catalyses a quinone + NADPH + H(+) = a quinol + NADP(+). Functionally, catalyzes the NADPH-dependent reduction of carbonyl compounds to their corresponding alcohols. Has low NADPH-dependent oxidoreductase activity. Acts on several orthoquinones, as well as on non-quinone compounds, such as isatin or on the anticancer drug oracin. Best substrates for CBR3 is 1,2- naphthoquinone, hence could play a role in protection against cytotoxicity of exogenous quinones. Exerts activity toward ortho-quinones but not paraquinones. No endogenous substrate for CBR3 except isatin has been identified. In Rattus norvegicus (Rat), this protein is Carbonyl reductase [NADPH] 3.